Consider the following 100-residue polypeptide: NADH-quinone oxidoreductase subunit K (100 aa).

3 consecutive transmembrane segments (helical) span residues 4–24 (LQHGLILAAVLFVLGFTCLVL), 28–48 (LLFMLIGLEIMINSAALAFVV), and 60–80 (IMYILAISLAAAEASIGLALL).

It belongs to the complex I subunit 4L family. As to quaternary structure, NDH-1 is composed of 13 different subunits. Subunits NuoA, H, J, K, L, M, N constitute the membrane sector of the complex.

It is found in the cell inner membrane. The enzyme catalyses a quinone + NADH + 5 H(+)(in) = a quinol + NAD(+) + 4 H(+)(out). Its function is as follows. NDH-1 shuttles electrons from NADH, via FMN and iron-sulfur (Fe-S) centers, to quinones in the respiratory chain. The immediate electron acceptor for the enzyme in this species is believed to be ubiquinone. Couples the redox reaction to proton translocation (for every two electrons transferred, four hydrogen ions are translocated across the cytoplasmic membrane), and thus conserves the redox energy in a proton gradient. The sequence is that of NADH-quinone oxidoreductase subunit K from Proteus mirabilis (strain HI4320).